Here is a 118-residue protein sequence, read N- to C-terminus: p-cumate 2,3-dioxygenase system, ferredoxin component (118 aa).

Residues 14-111 (VGLCATDDVA…VTVEGGQIFV (98 aa)) form the Rieske domain. Residues Cys-54, His-56, Cys-74, and His-77 each coordinate [2Fe-2S] cluster.

It belongs to the bacterial ring-hydroxylating dioxygenase ferredoxin component family. In terms of assembly, the p-cumate 2,3-dioxygenase multicomponent enzyme system is composed of an electron transfer component and a dioxygenase component (iron sulfur protein (ISP)). The electron transfer component is composed of a ferredoxin reductase (CmtAa) and a ferredoxin (CmtAd), and the dioxygenase component is formed of a large alpha subunit (CmtAb) and a small beta subunit (CmtAc). Requires [2Fe-2S] cluster as cofactor.

Its pathway is aromatic compound metabolism; p-cumate degradation; acetaldehyde and pyruvate from p-cumate. In terms of biological role, component of the p-cumate 2,3-dioxygenase multicomponent enzyme system which catalyzes the incorporation of both atoms of molecular oxygen into p-cumate to form cis-2,3-dihydroxy-2,3-dihydro-p-cumate. Functions as an intermediate electron transfer protein via a specific interaction with iron sulfur protein components (ISP)(CmtAb and CmtAc). This Pseudomonas putida (Arthrobacter siderocapsulatus) protein is p-cumate 2,3-dioxygenase system, ferredoxin component.